The primary structure comprises 234 residues: Putative N-acetylmannosamine-6-phosphate 2-epimerase (234 aa).

The protein belongs to the NanE family.

It catalyses the reaction an N-acyl-D-glucosamine 6-phosphate = an N-acyl-D-mannosamine 6-phosphate. It functions in the pathway amino-sugar metabolism; N-acetylneuraminate degradation; D-fructose 6-phosphate from N-acetylneuraminate: step 3/5. Functionally, converts N-acetylmannosamine-6-phosphate (ManNAc-6-P) to N-acetylglucosamine-6-phosphate (GlcNAc-6-P). This Klebsiella pneumoniae subsp. pneumoniae (strain ATCC 700721 / MGH 78578) protein is Putative N-acetylmannosamine-6-phosphate 2-epimerase.